Reading from the N-terminus, the 158-residue chain is 6,7-dimethyl-8-ribityllumazine synthase (158 aa).

Residues Phe22, 56-58 (ALE), and 80-82 (VVI) contribute to the 5-amino-6-(D-ribitylamino)uracil site. 85–86 (ET) lines the (2S)-2-hydroxy-3-oxobutyl phosphate pocket. His88 acts as the Proton donor in catalysis. Asn113 contributes to the 5-amino-6-(D-ribitylamino)uracil binding site. Arg127 lines the (2S)-2-hydroxy-3-oxobutyl phosphate pocket.

Belongs to the DMRL synthase family.

The enzyme catalyses (2S)-2-hydroxy-3-oxobutyl phosphate + 5-amino-6-(D-ribitylamino)uracil = 6,7-dimethyl-8-(1-D-ribityl)lumazine + phosphate + 2 H2O + H(+). The protein operates within cofactor biosynthesis; riboflavin biosynthesis; riboflavin from 2-hydroxy-3-oxobutyl phosphate and 5-amino-6-(D-ribitylamino)uracil: step 1/2. Its function is as follows. Catalyzes the formation of 6,7-dimethyl-8-ribityllumazine by condensation of 5-amino-6-(D-ribitylamino)uracil with 3,4-dihydroxy-2-butanone 4-phosphate. This is the penultimate step in the biosynthesis of riboflavin. The polypeptide is 6,7-dimethyl-8-ribityllumazine synthase (Neisseria meningitidis serogroup C / serotype 2a (strain ATCC 700532 / DSM 15464 / FAM18)).